The chain runs to 153 residues: Coiled-coil domain-containing protein 182 (153 aa).

Residues 46 to 109 (ADLEILQQKV…RLREEEDRGI (64 aa)) adopt a coiled-coil conformation.

In Homo sapiens (Human), this protein is Coiled-coil domain-containing protein 182 (CCDC182).